A 261-amino-acid chain; its full sequence is tRNA pseudouridine synthase A (261 aa).

Aspartate 51 acts as the Nucleophile in catalysis. Tyrosine 109 is a substrate binding site.

Belongs to the tRNA pseudouridine synthase TruA family. As to quaternary structure, homodimer.

The catalysed reaction is uridine(38/39/40) in tRNA = pseudouridine(38/39/40) in tRNA. Its function is as follows. Formation of pseudouridine at positions 38, 39 and 40 in the anticodon stem and loop of transfer RNAs. The polypeptide is tRNA pseudouridine synthase A (Shewanella frigidimarina (strain NCIMB 400)).